Reading from the N-terminus, the 152-residue chain is Endoribonuclease YbeY (152 aa).

Zn(2+)-binding residues include histidine 114, histidine 118, and histidine 124.

The protein belongs to the endoribonuclease YbeY family. The cofactor is Zn(2+).

It localises to the cytoplasm. Its function is as follows. Single strand-specific metallo-endoribonuclease involved in late-stage 70S ribosome quality control and in maturation of the 3' terminus of the 16S rRNA. The chain is Endoribonuclease YbeY from Coxiella burnetii (strain CbuK_Q154) (Coxiella burnetii (strain Q154)).